The following is a 355-amino-acid chain: tRNA pseudouridine synthase D (355 aa).

The Nucleophile role is filled by D84. The TRUD domain maps to 160-306; that stretch reads GVPNYFGLQR…MAHERRILRL (147 aa).

The protein belongs to the pseudouridine synthase TruD family.

It catalyses the reaction uridine(13) in tRNA = pseudouridine(13) in tRNA. Functionally, responsible for synthesis of pseudouridine from uracil-13 in transfer RNAs. This chain is tRNA pseudouridine synthase D, found in Pseudomonas aeruginosa (strain ATCC 15692 / DSM 22644 / CIP 104116 / JCM 14847 / LMG 12228 / 1C / PRS 101 / PAO1).